The chain runs to 100 residues: Urease subunit gamma (100 aa).

The protein belongs to the urease gamma subunit family. In terms of assembly, heterotrimer of UreA (gamma), UreB (beta) and UreC (alpha) subunits. Three heterotrimers associate to form the active enzyme.

It is found in the cytoplasm. The enzyme catalyses urea + 2 H2O + H(+) = hydrogencarbonate + 2 NH4(+). It participates in nitrogen metabolism; urea degradation; CO(2) and NH(3) from urea (urease route): step 1/1. The chain is Urease subunit gamma from Corynebacterium urealyticum (strain ATCC 43042 / DSM 7109).